The following is a 130-amino-acid chain: Small ribosomal subunit protein uS11c (130 aa).

The protein belongs to the universal ribosomal protein uS11 family. Part of the 30S ribosomal subunit.

Its subcellular location is the plastid. The protein resides in the chloroplast. This chain is Small ribosomal subunit protein uS11c, found in Cycas taitungensis (Prince sago).